We begin with the raw amino-acid sequence, 596 residues long: Aspartate--tRNA(Asp/Asn) ligase (596 aa).

An L-aspartate-binding site is contributed by Glu173. Residues 197–200 form an aspartate region; the sequence is QLFK. Arg219 lines the L-aspartate pocket. Residues 219 to 221 and Gln228 contribute to the ATP site; that span reads RDE. Residue His450 participates in L-aspartate binding. An ATP-binding site is contributed by Glu485. L-aspartate is bound at residue Arg492. Residue 537 to 540 participates in ATP binding; it reads GLDR.

Belongs to the class-II aminoacyl-tRNA synthetase family. Type 1 subfamily. In terms of assembly, homodimer.

It is found in the cytoplasm. The enzyme catalyses tRNA(Asx) + L-aspartate + ATP = L-aspartyl-tRNA(Asx) + AMP + diphosphate. Its function is as follows. Aspartyl-tRNA synthetase with relaxed tRNA specificity since it is able to aspartylate not only its cognate tRNA(Asp) but also tRNA(Asn). Reaction proceeds in two steps: L-aspartate is first activated by ATP to form Asp-AMP and then transferred to the acceptor end of tRNA(Asp/Asn). In Hydrogenovibrio crunogenus (strain DSM 25203 / XCL-2) (Thiomicrospira crunogena), this protein is Aspartate--tRNA(Asp/Asn) ligase.